A 235-amino-acid chain; its full sequence is Large ribosomal subunit protein uL4 (235 aa).

Positions 45–75 (RAGTASTKTRGEVSGGGRKPWPQKHTGRARH) are disordered. The segment covering 65–75 (WPQKHTGRARH) has biased composition (basic residues).

This sequence belongs to the universal ribosomal protein uL4 family. As to quaternary structure, part of the 50S ribosomal subunit.

In terms of biological role, one of the primary rRNA binding proteins, this protein initially binds near the 5'-end of the 23S rRNA. It is important during the early stages of 50S assembly. It makes multiple contacts with different domains of the 23S rRNA in the assembled 50S subunit and ribosome. Functionally, forms part of the polypeptide exit tunnel. This is Large ribosomal subunit protein uL4 from Thermotoga petrophila (strain ATCC BAA-488 / DSM 13995 / JCM 10881 / RKU-1).